Reading from the N-terminus, the 1754-residue chain is Collagen alpha-1(XVIII) chain (1754 aa).

An N-terminal signal peptide occupies residues 1-23; sequence MAPYPCGCHILLLLFCCLAAARA. Residues 42–104 form a disordered region; it reads ATTIPEPQGP…TSAESPDAPE (63 aa). Over residues 57 to 73 the composition is skewed to polar residues; it reads TADTTTHVTPRNGSTEP. N-linked (GlcNAc...) asparagine glycosylation is found at asparagine 68, asparagine 129, and asparagine 164. The interval 152–256 is disordered; that stretch reads LALAGPSSTP…APSQQLQRPD (105 aa). The span at 157-169 shows a compositional bias: polar residues; that stretch reads PSSTPQENGTTLW. Residues 215–253 show a composition bias toward low complexity; the sequence is SGRASLSSLLGGAPPWGSLQDPDSQGLSPAAAAPSQQLQ. Positions 329–446 constitute an FZ domain; it reads APAGRCLPLP…TQEDGYCVLI (118 aa). 5 disulfide bridges follow: cysteine 334–cysteine 397, cysteine 344–cysteine 390, cysteine 381–cysteine 419, cysteine 408–cysteine 443, and cysteine 412–cysteine 432. One can recognise a Laminin G-like domain in the interval 456–644; the sequence is EVGLLQLLGD…IAELKVRRDP (189 aa). Residues 645 to 751 are nonhelical region 1 (NC1); that stretch reads QVSPMHCLDE…RTPGGRVKEG (107 aa). A disordered region spans residues 645–1443; it reads QVSPMHCLDE…GPPGTMGASS (799 aa). The segment covering 672-681 has biased composition (basic and acidic residues); the sequence is DARELLREET. Threonine 696 is modified (phosphothreonine). A compositionally biased stretch (polar residues) spans 717-738; it reads QTTVASLGAQTLPGSDSVSTWD. Residues 752–785 form a triple-helical region 1 (COL1) region; sequence GLKGQKGEPGVPGPPGRAGPPGSPCLPGPPGLPC. Positions 762–789 are enriched in pro residues; that stretch reads VPGPPGRAGPPGSPCLPGPPGLPCPVSP. The tract at residues 786-795 is nonhelical region 2 (NC2); the sequence is PVSPLGPAGP. A triple-helical region 2 (COL2) region spans residues 796 to 875; sequence ALQTVPGPQG…QGPPGPPGPS (80 aa). A compositionally biased stretch (basic and acidic residues) spans 815–831; it reads TPGRDGEPGDPGEDGKP. The segment covering 833 to 846 has biased composition (low complexity); that stretch reads DTGPQGFPGTPGDV. The segment covering 862–874 has biased composition (pro residues); sequence PPGPQGPPGPPGP. Positions 876–899 are nonhelical region 3 (NC3); it reads FRHDKLTFIDMEGSGFGGDLEALR. The O-linked (Xyl...) (chondroitin sulfate) serine glycan is linked to serine 889. The interval 900–1021 is triple-helical region 3 (COL3); that stretch reads GPRGFPGPPG…PGPPGPPGPG (122 aa). Positions 904 to 914 are enriched in pro residues; sequence FPGPPGPPGVP. Asparagine 926 carries N-linked (GlcNAc...) asparagine glycosylation. The segment covering 930–942 has biased composition (low complexity); it reads VPGPAGLPGVPGR. Positions 946 to 961 are enriched in pro residues; it reads PGFPGLPGPPGPPGRE. Residues 976 to 1003 show a composition bias toward low complexity; that stretch reads AGAPGHKGSKGAPGPAGARGESGLAGAP. The segment covering 1005 to 1021 has biased composition (pro residues); sequence PAGPPGPPGPPGPPGPG. The tract at residues 1022-1044 is nonhelical region 4 (NC4); it reads LPAGFDDMEGSGGPFWSTARSAD. Positions 1045–1127 are triple-helical region 4 (COL4); the sequence is GPQGPPGLPG…PGPPGPPGPV (83 aa). Positions 1053-1065 are enriched in low complexity; it reads PGLKGDPGVPGLP. Residues 1095–1109 are compositionally biased toward basic and acidic residues; the sequence is KGDRGSRGEKGDPGK. Residues 1117–1126 are compositionally biased toward pro residues; sequence LPGPPGPPGP. The nonhelical region 5 (NC5) stretch occupies residues 1128 to 1141; it reads VYVSEQDGSVLSVP. Over residues 1141 to 1153 the composition is skewed to low complexity; the sequence is PGPEGRPGFAGFP. Positions 1142 to 1183 are triple-helical region 5 (COL5); it reads GPEGRPGFAGFPGPAGPKGNLGSKGERGSPGPKGEKGEPGSI. The interval 1184–1196 is nonhelical region 6 (NC6); the sequence is FSPDGGALGPAQK. Positions 1197–1269 are triple-helical region 6 (COL6); sequence GAKGEPGFRG…PGPPGPPGTP (73 aa). Positions 1254–1268 are enriched in pro residues; the sequence is PGPPGPPGPPGPPGT. Positions 1270-1279 are nonhelical region 7 (NC7); sequence VYDSNVFAES. A triple-helical region 7 (COL7) region spans residues 1280–1312; it reads SRPGPPGLPGNQGPPGPKGAKGEVGPPGPPGQF. Residues 1282 to 1296 are compositionally biased toward pro residues; that stretch reads PGPPGLPGNQGPPGP. A nonhelical region 8 (NC8) region spans residues 1313-1324; it reads PFDFLQLEAEMK. A compositionally biased stretch (basic and acidic residues) spans 1321–1341; that stretch reads AEMKGEKGDRGDAGQKGERGE. Positions 1325 to 1346 are triple-helical region 8 (COL8); the sequence is GEKGDRGDAGQKGERGEPGGGG. The Cell attachment site motif lies at 1330–1332; the sequence is RGD. Residues 1347-1353 form a nonhelical region 9 (NC9) region; the sequence is FFGSSLP. Pro residues-rich tracts occupy residues 1353–1365, 1401–1414, and 1424–1436; these read PGPP…PGPR, PPGP…PSFP, and PGPP…PGPP. A triple-helical region 9 (COL9) region spans residues 1354-1411; sequence GPPGPPGPPGPRGYPGIPGPKGESIRGQPGPPGPQGPPGIGYEGRQGPPGPPGPPGPP. The interval 1412–1424 is nonhelical region 10 (NC10); it reads SFPGPHRQTISVP. A triple-helical region 10 (COL10) region spans residues 1425–1442; it reads GPPGPPGPPGPPGTMGAS. The tract at residues 1443–1754 is nonhelical region 11 (NC11); the sequence is SGVRLWATRQ…IENSFMTASK (312 aa). The tract at residues 1456-1501 is non-collagenous domain 1 association domain; that stretch reads GQVHEVPEGWLIFVAEQEELYVRVQNGFRKVQLEARTPLPRGTDNE. The tract at residues 1502–1571 is non-collagenous domain 1 hinge region; that stretch reads VAALQPPVVQ…RPARPTSPPA (70 aa). Positions 1511–1556 are disordered; it reads QLHDSNPYPRREHPHPTARPWRADDILASPPRLPEPQPYPGAPHHS. The segment covering 1519–1535 has biased composition (basic and acidic residues); the sequence is PRREHPHPTARPWRADD. Residues 1541–1551 show a composition bias toward pro residues; the sequence is PRLPEPQPYPG. Residue threonine 1567 is glycosylated (O-linked (GalNAc...) threonine). Histidine 1572, histidine 1574, histidine 1582, and aspartate 1647 together coordinate Zn(2+). Cystine bridges form between cysteine 1604/cysteine 1744 and cysteine 1706/cysteine 1736.

It belongs to the multiplexin collagen family. As to quaternary structure, forms homotrimers. Recombinant non-collagenous domain 1 has stronger affinity to NID1, HSPG2 and laminin-1:NID1 complex and lower affinity to FBLN1 and FBLN2 than endostatin. In terms of assembly, monomeric. Interacts with KDR/VEGFR2. Interacts with the ITGA5:ITGB1 complex. Interacts with NID1, HSPG2, laminin-1:NID1 complex, FBLN1 and FBLN2. Prolines at the third position of the tripeptide repeating unit (G-X-Y) of the triple-helical regions are hydroxylated. Post-translationally, circulating endostatins are found as sialoglycoprotein and asialoglycoprotein structures. In terms of processing, undergoes proteolytic processing by CTSL/cathepsin-L and elastase-like proteases to generate both non-collagenous domain 1 trimers and endostatin monomers. In tissue extracts (brain, skeletal muscle, heart, kidney, testis and liver) predominantly bands of approximately 38 kDa are detected; recombinant non-collagenous domain 1 shows similar mobility. In vitro, several proteolytic cleavage sites in the non-collagenous domain 1 hinge region generating different endostatin-like peptides are reported. As to expression, detected in placenta (at protein level). Present in multiple organs with highest levels in liver, lung and kidney.

The protein resides in the secreted. It is found in the extracellular space. Its subcellular location is the extracellular matrix. It localises to the basement membrane. Its function is as follows. Probably plays a major role in determining the retinal structure as well as in the closure of the neural tube. In terms of biological role, may regulate extracellular matrix-dependent motility and morphogenesis of endothelial and non-endothelial cells; the function requires homotrimerization and implicates MAPK signaling. Functionally, potently inhibits endothelial cell proliferation and angiogenesis. May inhibit angiogenesis by binding to the heparan sulfate proteoglycans involved in growth factor signaling. Inhibits VEGFA-induced endothelial cell proliferation and migration. Seems to inhibit VEGFA-mediated signaling by blocking the interaction of VEGFA to its receptor KDR/VEGFR2. Modulates endothelial cell migration in an integrin-dependent manner implicating integrin ITGA5:ITGB1 and to a lesser extent ITGAV:ITGB3 and ITGAV:ITGB5. May negatively regulate the activity of homotrimeric non-collagenous domain 1. This Homo sapiens (Human) protein is Collagen alpha-1(XVIII) chain.